A 154-amino-acid chain; its full sequence is 17 kDa surface antigen (154 aa).

The signal sequence occupies residues 1–19 (MKLLSKIMVIALATSMLQA). The N-palmitoyl cysteine moiety is linked to residue C20. A lipid anchor (S-diacylglycerol cysteine) is attached at C20.

It belongs to the rickettsiale 17 kDa surface antigen family.

It localises to the cell outer membrane. This is 17 kDa surface antigen (omp) from Rickettsia parkeri.